Consider the following 320-residue polypeptide: o-succinylbenzoate synthase (320 aa).

Lys133 acts as the Proton donor in catalysis. Mg(2+) is bound by residues Asp161, Glu190, and Asp213. Residue Lys235 is the Proton acceptor of the active site.

The protein belongs to the mandelate racemase/muconate lactonizing enzyme family. MenC type 1 subfamily. A divalent metal cation is required as a cofactor.

It carries out the reaction (1R,6R)-6-hydroxy-2-succinyl-cyclohexa-2,4-diene-1-carboxylate = 2-succinylbenzoate + H2O. It functions in the pathway quinol/quinone metabolism; 1,4-dihydroxy-2-naphthoate biosynthesis; 1,4-dihydroxy-2-naphthoate from chorismate: step 4/7. It participates in quinol/quinone metabolism; menaquinone biosynthesis. In terms of biological role, converts 2-succinyl-6-hydroxy-2,4-cyclohexadiene-1-carboxylate (SHCHC) to 2-succinylbenzoate (OSB). The polypeptide is o-succinylbenzoate synthase (Salmonella dublin (strain CT_02021853)).